The following is a 320-amino-acid chain: Acetyl-coenzyme A carboxylase carboxyl transferase subunit alpha (320 aa).

Positions 41-295 (RIEEKAGQAL…GEAIAQAFDE (255 aa)) constitute a CoA carboxyltransferase C-terminal domain.

This sequence belongs to the AccA family. As to quaternary structure, acetyl-CoA carboxylase is a heterohexamer composed of biotin carboxyl carrier protein (AccB), biotin carboxylase (AccC) and two subunits each of ACCase subunit alpha (AccA) and ACCase subunit beta (AccD).

Its subcellular location is the cytoplasm. The enzyme catalyses N(6)-carboxybiotinyl-L-lysyl-[protein] + acetyl-CoA = N(6)-biotinyl-L-lysyl-[protein] + malonyl-CoA. It participates in lipid metabolism; malonyl-CoA biosynthesis; malonyl-CoA from acetyl-CoA: step 1/1. In terms of biological role, component of the acetyl coenzyme A carboxylase (ACC) complex. First, biotin carboxylase catalyzes the carboxylation of biotin on its carrier protein (BCCP) and then the CO(2) group is transferred by the carboxyltransferase to acetyl-CoA to form malonyl-CoA. The chain is Acetyl-coenzyme A carboxylase carboxyl transferase subunit alpha from Bradyrhizobium sp. (strain BTAi1 / ATCC BAA-1182).